The sequence spans 2076 residues: MKRHQFRFWIFELREILREIKNSPHFLDSWTKFDSVRSLIHIFFHQERLMKLFDPRIWSILLSRDSQGSTSNRYFIIKGLVLLVVAVLISRINNRNMVERKNLYLRGLLPIPMNSIGPGNETLEESFWSSDINRLIVLLLYLPKGKKTSESCFMDPKESLWLFPINKINQKCIMPESNRGSRWWRNRIGKKRDSSCKISTKTVAGIEISSKEKDLKYLEFLFLSYTDDPIRKDRFFSKVQNVSSNIQYDSTRSIFVQVTDFSQSKGSSDQSRDHFDSISKEDSEYHTLIDQTEIPQLKGRSIPGDPSFLQTERTEIESDRFPKCLSGSSPMSPLFPEHEKQMIIHRLPEEIDEFLGNPTRSIRSFFSDRWSELHMGSNPTDRSTRDQKWLKKQQDVSFVSSRRSENKEMVDIFKIITYLQNTVSIHPISSDPGCDMVPKDEPDMDSSNKISFLNKNPFFDLFHLFHDRNKGGYTLHHDFESEERFQEMADLFTLSITEPDLVYHRGFAFSIDSCGLDQKKLVNGKEKTKDESKKKSLLVLPPLFYEENAFFYRSIRKKPVWIHCGNDLFASNNIMEAVNQYRLIRNLIQIQYSAYGYIRNVLNRFFLMNRSDRNFEYGIQRDQIGNDTLNHITIMKYTINQHLSNLKKSQKKWFDPLISRTERSMNRDPNAYRYKWSNGSKNFQEHLEHFVSEQKNRFQVVFDQLRINQYSINWSEAIDKQDLSKSLRFFLSKSLLFLSKPLRFFLSKSLPLFFVSIGNSPIHRSEIHIYELKGPNEPLCNQLLKSIGVQIIHLHKLKPDHDTSQRSKFLINGGTISPFLFNKIPKWMIDSFHTRKNRSKSFANTDSYFSMISHDRDNWLNPVKPFHRSSLISSFYKANQLRFLNNPHHFWFYCNKRFPFYVEKTRINNYDRTYGQFLNILFIRNKIFSLCVGKKKHLLPIYSQVSDIFIPNDFPQSGDETYNLYKSFRFPIRPDPFVRRALYSIADISGTPLTEEQIVNFERTYCQPLSDMNLSDSEGKNLHQYLSFNSNIGLIHTPCSEKNLPYVKRKKQSLYLRKKRSLYLKKCVEKGQMYRTSQQRDSAFSKWNLFQTYMPWFLTSTGCKYLTSVLLDIFSDRLSILSSSPKLVSILNSIMHRSDISRLIKKWWTILPQWNLISEISSKCLQNLLLSEEMIHRNNESPVSMILTHLRSTNAREFLYSILFLLLVAGYLVRTHLLFVSRVSNELQTELEKIKSLMIPSYMIELQKLLYRYPTSTSKSESESESEYEYELNSFLLNNLFALEQLDWNIDLISIISNTITFSRNTRHLSRTSKEIYSLIRERKNVNSDWIEDRVESWVTINDLIDEDERDLAVQFSTLTTEKRIDQILWSLTHSHPVSKNDLDYQIIEQPGLISLRYLVDIHKKDLMNYEFNGSCLAEKRIFLANYRTITYSQTPSRGKPFSLRLDLSPSRGILVIGSIGTGRSHLVKYLATNSYVPFITVFPDRGLSDRPIYCFMDEDTDPDEDYDYIDDDIDIDSDNFDTELETIADVVTMDNMLLKVIRFDILGQFELAKTMSPCIIWIPNIHDLYLNESNYLSLGLLTNFLSSLYGDCETTRNILVFASTHLPQLVDPVLIDPKKFNTCIKIRRLLSPQQRKHFFNLLYTRGFHSENKMFHANGFGSITMGSNARDLVALTNEVLSISITQKKSILETNTIRLALHRQTWDLRSHVRSVPDHGILFYQIGRAVAQNVLLSNCCTDPISIYMKKKSCNEGFSYLYKWYYELGTSMKKLTILLYLLSCSAGSVAQDLWSPPGPDENSWITSDRFVENDSDLVDSLLEIEGALVGSWLLRSEPRNPLDMMQKRSCSIFKKDESEFAEGEGALALDPQEMLFYNQIVWAPRLWRPPCGKLFDCIEYSQEDDDDWEFWQSGTKYYWMRDSEGGQGFWVSQLKKFLWNPEAADPFLFLFKDQPFVSDSDFSSYHQPFSNFLVELMPPFKASSVSLYKGWVNKKLQEMCLEYLSDRERWLRTNSSLSHGSFRSNTLSESYQYLANLFLSNATLLDQMTKTLLRKRWLFPDEMKDLIHGTGGGTELTGR.

1458 to 1465 (GSIGTGRS) provides a ligand contact to ATP.

This sequence belongs to the Ycf2 family.

Its subcellular location is the plastid. The protein localises to the chloroplast stroma. Probable ATPase of unknown function. Its presence in a non-photosynthetic plant (Epifagus virginiana) and experiments in tobacco indicate that it has an essential function which is probably not related to photosynthesis. The chain is Protein Ycf2 from Acorus calamus (Sweet flag).